Here is a 116-residue protein sequence, read N- to C-terminus: MAGRSGDSDEDLLKAVRLIKFLYQSNPPPNPEGTRQARRNRRRRWRERQRQIHSISERILSTYLGRSAEPVPLQLPPLERLTLDCNEDCGTSGTQGVGSPQILVESPTVLESGTKE.

2 positions are modified to phosphoserine; by host CK2: S5 and S8. Positions 18-26 (LIKFLYQSN) are homomultimerization. The tract at residues 23–49 (YQSNPPPNPEGTRQARRNRRRRWRERQ) is disordered. Residues 34–50 (TRQARRNRRRRWRERQR) carry the Nuclear localization signal and RNA-binding (RRE) motif. A compositionally biased stretch (basic residues) spans 36–47 (QARRNRRRRWRE). Residues 73–84 (LQLPPLERLTLD) carry the Nuclear export signal and binding to XPO1 motif. 2 positions are modified to phosphoserine; by host: S92 and S99. The segment at 92-116 (SGTQGVGSPQILVESPTVLESGTKE) is disordered.

It belongs to the HIV-1 REV protein family. Homomultimer; when bound to the RRE. Multimeric assembly is essential for activity and may involve XPO1. Binds to human KPNB1, XPO1, TNPO1, RANBP5 and IPO7. Interacts with the viral Integrase. Interacts with human KHDRBS1. Interacts with human NAP1; this interaction decreases Rev multimerization and stimulates its activity. Interacts with human DEAD-box helicases DDX3 and DDX24; these interactions may serve for viral RNA export to the cytoplasm and packaging, respectively. Interacts with human PSIP1; this interaction may inhibit HIV-1 DNA integration by promoting dissociation of the Integrase-LEDGF/p75 complex. In terms of processing, asymmetrically arginine dimethylated at one site by host PRMT6. Methylation impairs the RNA-binding activity and export of viral RNA from the nucleus to the cytoplasm. Phosphorylated by protein kinase CK2. Presence of, and maybe binding to the N-terminus of the regulatory beta subunit of CK2 is necessary for CK2-mediated Rev's phosphorylation.

Its subcellular location is the host nucleus. The protein resides in the host nucleolus. It localises to the host cytoplasm. Functionally, escorts unspliced or incompletely spliced viral pre-mRNAs (late transcripts) out of the nucleus of infected cells. These pre-mRNAs carry a recognition sequence called Rev responsive element (RRE) located in the env gene, that is not present in fully spliced viral mRNAs (early transcripts). This function is essential since most viral proteins are translated from unspliced or partially spliced pre-mRNAs which cannot exit the nucleus by the pathway used by fully processed cellular mRNAs. Rev itself is translated from a fully spliced mRNA that readily exits the nucleus. Rev's nuclear localization signal (NLS) binds directly to KPNB1/Importin beta-1 without previous binding to KPNA1/Importin alpha-1. KPNB1 binds to the GDP bound form of RAN (Ran-GDP) and targets Rev to the nucleus. In the nucleus, the conversion from Ran-GDP to Ran-GTP dissociates Rev from KPNB1 and allows Rev's binding to the RRE in viral pre-mRNAs. Rev multimerization on the RRE via cooperative assembly exposes its nuclear export signal (NES) to the surface. Rev can then form a complex with XPO1/CRM1 and Ran-GTP, leading to nuclear export of the complex. Conversion from Ran-GTP to Ran-GDP mediates dissociation of the Rev/RRE/XPO1/RAN complex, so that Rev can return to the nucleus for a subsequent round of export. Beside KPNB1, also seems to interact with TNPO1/Transportin-1, RANBP5/IPO5 and IPO7/RANBP7 for nuclear import. The nucleoporin-like HRB/RIP is an essential cofactor that probably indirectly interacts with Rev to release HIV RNAs from the perinuclear region to the cytoplasm. This chain is Protein Rev, found in Human immunodeficiency virus type 1 group M subtype B (isolate BRU/LAI) (HIV-1).